The sequence spans 449 residues: Anther-specific proline-rich protein APG (449 aa).

A compositionally biased stretch (pro residues) spans 1 to 118 (PPKPQPKPPP…KPPAPSPPKP (118 aa)). The segment at 1–123 (PPKPQPKPPP…SPPKPQNKTI (123 aa)) is disordered. Serine 132 functions as the Nucleophile in the catalytic mechanism. Active-site residues include aspartate 425 and histidine 428.

It belongs to the 'GDSL' lipolytic enzyme family. As to expression, found in anther, only in male fertile plants.

The polypeptide is Anther-specific proline-rich protein APG (APG) (Brassica napus (Rape)).